Reading from the N-terminus, the 340-residue chain is MGGVAAGTRWIHHVRRLSAAKVSTDALERGQSRVIDASLTLIRERAKLKAELLRALGGVKASACLLGVPLGHNSSFLQGPAFAPPRIREAIWCGSTNSSTEEGKELNDPRVLTDVGDVPIQEIRDCGVEDDRLMNVVSESVKTVMEEDPLRPLVLGGDHSISYPVVRAVSEKLGGPVDILHLDAHPDIYDAFEGNIYSHASSFARIMEGGYARRLLQVGIRSITKEGREQGKRFGVEQYEMRTFSKDREKLESLKLGEGVKGVYISVDVDCLDPAFAPGVSHIEPGGLSFRDVLNILHNLQGDVVAGDVVEFNPQRDTVDGMTAMVAAKLVRELTAKISK.

The N-terminal 24 residues, 1-24 (MGGVAAGTRWIHHVRRLSAAKVST), are a transit peptide targeting the mitochondrion. Residues H159, D183, H185, and D187 each coordinate Mn(2+). Substrate-binding positions include 185-189 (HPDIY) and 193-195 (EGN). Mn(2+) is bound by residues D268 and D270. E311 is a substrate binding site.

Belongs to the arginase family. Requires Mn(2+) as cofactor.

It is found in the mitochondrion. The catalysed reaction is L-arginine + H2O = urea + L-ornithine. It participates in nitrogen metabolism; urea cycle; L-ornithine and urea from L-arginine: step 1/1. Functionally, catalyzes the hydrolysis of L-arginine to urea and L-ornithine. The latter can be utilized in the urea cycle or as a precursor for the synthesis of both polyamines and proline. This chain is Arginase 1, mitochondrial, found in Oryza sativa subsp. indica (Rice).